A 316-amino-acid polypeptide reads, in one-letter code: Exonuclease DPD1, chloroplastic/mitochondrial (316 aa).

The N-terminal 63 residues, 1-63 (MCISISQVSR…NVSTTTQGSR (63 aa)), are a transit peptide targeting the chloroplast and mitochondrion. Residues 112–282 (IVSDLETTGL…SDVLLLSKVF (171 aa)) form the Exonuclease domain. Residues Asp115 and Glu117 each contribute to the Mg(2+) site. The active-site Proton donor/acceptor is His269. Asp274 serves as a coordination point for Mg(2+).

The protein belongs to the exonuclease superfamily. TREX family. The cofactor is Mg(2+). Highly expressed in mature pollen grains. Detected in flowers, senescing leaves and roots.

Its subcellular location is the plastid. The protein resides in the chloroplast. It is found in the mitochondrion. Inhibited by free nucleotide diphosphates (NDPs). Exonuclease required for organelle DNA degradation during pollen development. Plays non-essential roles in maternal inheritance. May be part of the DNA salvage machinery. The polypeptide is Exonuclease DPD1, chloroplastic/mitochondrial (Arabidopsis thaliana (Mouse-ear cress)).